Reading from the N-terminus, the 380-residue chain is Cytochrome b (380 aa).

4 consecutive transmembrane segments (helical) span residues 34–54 (FGSL…LLAM), 78–99 (WLIR…YLHI), 114–134 (WNTG…GYVL), and 179–199 (FFAL…IHLT). His-84 and His-98 together coordinate heme b. Residues His-183 and His-197 each contribute to the heme b site. Position 202 (His-202) interacts with a ubiquinone. Helical transmembrane passes span 227–247 (LKDI…ALFS), 289–309 (LGGV…PLLH), 321–341 (LSQL…WIGS), and 348–368 (FIII…ILFP).

The protein belongs to the cytochrome b family. As to quaternary structure, the cytochrome bc1 complex contains 11 subunits: 3 respiratory subunits (MT-CYB, CYC1 and UQCRFS1), 2 core proteins (UQCRC1 and UQCRC2) and 6 low-molecular weight proteins (UQCRH/QCR6, UQCRB/QCR7, UQCRQ/QCR8, UQCR10/QCR9, UQCR11/QCR10 and a cleavage product of UQCRFS1). This cytochrome bc1 complex then forms a dimer. Heme b serves as cofactor.

It localises to the mitochondrion inner membrane. Component of the ubiquinol-cytochrome c reductase complex (complex III or cytochrome b-c1 complex) that is part of the mitochondrial respiratory chain. The b-c1 complex mediates electron transfer from ubiquinol to cytochrome c. Contributes to the generation of a proton gradient across the mitochondrial membrane that is then used for ATP synthesis. This chain is Cytochrome b (MT-CYB), found in Oceanodroma microsoma (Least storm petrel).